Reading from the N-terminus, the 727-residue chain is Catalase-peroxidase (727 aa).

The disordered stretch occupies residues 1 to 26; the sequence is MDTKVETGGKCPVAHGPAGAKGRGNR. Positions 97–219 form a cross-link, tryptophyl-tyrosyl-methioninium (Trp-Tyr) (with M-245); sequence WHSAGTYRIT…LGAVQMGLIY (123 aa). Histidine 98 (proton acceptor) is an active-site residue. Positions 219–245 form a cross-link, tryptophyl-tyrosyl-methioninium (Tyr-Met) (with W-97); the sequence is YVNPEGPNGNPDPIAAARDIRETFSRM. Histidine 260 contributes to the heme b binding site.

The protein belongs to the peroxidase family. Peroxidase/catalase subfamily. As to quaternary structure, homodimer or homotetramer. The cofactor is heme b. Post-translationally, formation of the three residue Trp-Tyr-Met cross-link is important for the catalase, but not the peroxidase activity of the enzyme.

The enzyme catalyses H2O2 + AH2 = A + 2 H2O. The catalysed reaction is 2 H2O2 = O2 + 2 H2O. Bifunctional enzyme with both catalase and broad-spectrum peroxidase activity. This is Catalase-peroxidase from Allorhizobium ampelinum (strain ATCC BAA-846 / DSM 112012 / S4) (Agrobacterium vitis (strain S4)).